The primary structure comprises 156 residues: Small ribosomal subunit protein uS7 (156 aa).

This sequence belongs to the universal ribosomal protein uS7 family. Part of the 30S ribosomal subunit. Contacts proteins S9 and S11.

One of the primary rRNA binding proteins, it binds directly to 16S rRNA where it nucleates assembly of the head domain of the 30S subunit. Is located at the subunit interface close to the decoding center, probably blocks exit of the E-site tRNA. The sequence is that of Small ribosomal subunit protein uS7 from Marinobacter nauticus (strain ATCC 700491 / DSM 11845 / VT8) (Marinobacter aquaeolei).